Consider the following 430-residue polypeptide: uncharacterized protein (430 aa).

The next 12 helical transmembrane spans lie at 36-56, 69-89, 100-122, 126-148, 160-180, 197-217, 253-273, 285-305, 317-337, 340-360, 384-404, and 406-426; these read LFVV…GVTV, AFAG…ALIV, TGLS…AAII, FLLF…ARYA, TAVS…PSLV, GPFI…FIML, IIVG…IMTM, LGAV…PSLV, AMAI…AFAP, SMIL…FGLI, VLIA…VAGS, and YLAL…VVVW.

Belongs to the major facilitator superfamily.

It is found in the cell membrane. This is an uncharacterized protein from Bacillus subtilis (strain 168).